The primary structure comprises 280 residues: Hemin import ATP-binding protein HmuV (280 aa).

Positions 26–260 constitute an ABC transporter domain; the sequence is LAAAGGLRVH…GLLSEVYDQP (235 aa). 59 to 66 provides a ligand contact to ATP; it reads GPNGAGKS.

It belongs to the ABC transporter superfamily. Heme (hemin) importer (TC 3.A.1.14.5) family. The complex is composed of two ATP-binding proteins (HmuV), two transmembrane proteins (HmuU) and a solute-binding protein (HmuT).

It is found in the cell membrane. Functionally, part of the ABC transporter complex HmuTUV involved in hemin import. Responsible for energy coupling to the transport system. In Streptomyces coelicolor (strain ATCC BAA-471 / A3(2) / M145), this protein is Hemin import ATP-binding protein HmuV.